A 313-amino-acid polypeptide reads, in one-letter code: Ribosomal RNA small subunit methyltransferase H (313 aa).

Residues 36 to 38 (GGH), Asp-56, Phe-80, Asp-102, and Gln-109 contribute to the S-adenosyl-L-methionine site.

It belongs to the methyltransferase superfamily. RsmH family.

The protein localises to the cytoplasm. It catalyses the reaction cytidine(1402) in 16S rRNA + S-adenosyl-L-methionine = N(4)-methylcytidine(1402) in 16S rRNA + S-adenosyl-L-homocysteine + H(+). Specifically methylates the N4 position of cytidine in position 1402 (C1402) of 16S rRNA. This chain is Ribosomal RNA small subunit methyltransferase H, found in Actinobacillus pleuropneumoniae serotype 3 (strain JL03).